A 1157-amino-acid chain; its full sequence is ATP-dependent helicase/deoxyribonuclease subunit B (1157 aa).

The UvrD-like helicase ATP-binding domain maps to 1 to 299 (MSIRFIIGRA…SHLEKYFFVR (299 aa)). ATP is bound at residue 8-15 (GRAGAGKT). Residues 279 to 590 (GNTARFKSPA…LVASLERSRN (312 aa)) enclose the UvrD-like helicase C-terminal domain. [4Fe-4S] cluster contacts are provided by C792, C1112, C1115, and C1121.

Belongs to the helicase family. AddB/RexB type 1 subfamily. As to quaternary structure, heterodimer of AddA and AddB. The cofactor is Mg(2+). It depends on [4Fe-4S] cluster as a cofactor.

Functionally, the heterodimer acts as both an ATP-dependent DNA helicase and an ATP-dependent, dual-direction single-stranded exonuclease. Recognizes the chi site generating a DNA molecule suitable for the initiation of homologous recombination. The AddB subunit has 5' -&gt; 3' nuclease activity but not helicase activity. The protein is ATP-dependent helicase/deoxyribonuclease subunit B of Pelotomaculum thermopropionicum (strain DSM 13744 / JCM 10971 / SI).